Consider the following 286-residue polypeptide: Ribosome maturation factor RimP (286 aa).

Positions leucine 200–leucine 224 are enriched in acidic residues. The interval leucine 200–histidine 286 is disordered. A compositionally biased stretch (basic residues) spans valine 248 to lysine 267. Positions alanine 273–histidine 286 are enriched in polar residues.

Belongs to the RimP family.

Its subcellular location is the cytoplasm. Its function is as follows. Required for maturation of 30S ribosomal subunits. The polypeptide is Ribosome maturation factor RimP (Xanthobacter autotrophicus (strain ATCC BAA-1158 / Py2)).